The sequence spans 414 residues: Collagenase (414 aa).

It belongs to the peptidase U32 family. In terms of assembly, homodimer. It depends on a metal cation as a cofactor.

In terms of biological role, has collagenase activity. Hydrolyzes type I collagen. May play a role in virulence. The protein is Collagenase (prtC) of Porphyromonas gingivalis (strain ATCC BAA-308 / W83).